We begin with the raw amino-acid sequence, 516 residues long: 3-ketoacyl-CoA synthase 4 (516 aa).

2 helical membrane-spanning segments follow: residues 48-68 (LISN…SVEA) and 87-107 (LVSI…YVMT). An FAE domain is found at 104-393 (YVMTRPRPVY…FFMTLVVKKL (290 aa)). Catalysis depends on residues C248, H327, H411, H415, H444, and N448.

It belongs to the thiolase-like superfamily. Chalcone/stilbene synthases family. Expressed at low levels in siliques, flowers, leaves and stems.

The protein resides in the membrane. It carries out the reaction a very-long-chain acyl-CoA + malonyl-CoA + H(+) = a very-long-chain 3-oxoacyl-CoA + CO2 + CoA. It participates in lipid metabolism; fatty acid biosynthesis. The chain is 3-ketoacyl-CoA synthase 4 from Arabidopsis thaliana (Mouse-ear cress).